The following is a 354-amino-acid chain: Hyaluronan and proteoglycan link protein 1 (354 aa).

The propeptide occupies 1-9; it reads MKSLLLLVL. Asn-21 and Asn-56 each carry an N-linked (GlcNAc...) asparagine glycan. The Ig-like V-type domain occupies 38-152; the sequence is PRLLVEAEQA…EGLEDDTAVV (115 aa). Cystine bridges form between Cys-61-Cys-139, Cys-181-Cys-252, Cys-205-Cys-226, Cys-279-Cys-349, and Cys-304-Cys-325. 2 Link domains span residues 159-254 and 259-351; these read VVFP…FCFT and GRFY…YCFR.

Belongs to the HAPLN family.

It localises to the secreted. It is found in the extracellular space. Its subcellular location is the extracellular matrix. In terms of biological role, stabilizes the aggregates of proteoglycan monomers with hyaluronic acid in the extracellular cartilage matrix. This chain is Hyaluronan and proteoglycan link protein 1 (HAPLN1), found in Sus scrofa (Pig).